The primary structure comprises 385 residues: UPF0284 protein PMM0439 (385 aa).

This sequence belongs to the UPF0284 family.

The protein is UPF0284 protein PMM0439 of Prochlorococcus marinus subsp. pastoris (strain CCMP1986 / NIES-2087 / MED4).